The following is a 232-amino-acid chain: Ribose-5-phosphate isomerase A (232 aa).

Substrate-binding positions include 29–32, 86–89, and 99–102; these read SGST, DGAD, and KGGG. Catalysis depends on glutamate 108, which acts as the Proton acceptor. Residue lysine 126 participates in substrate binding.

It belongs to the ribose 5-phosphate isomerase family. Homodimer.

It carries out the reaction aldehydo-D-ribose 5-phosphate = D-ribulose 5-phosphate. It participates in carbohydrate degradation; pentose phosphate pathway; D-ribose 5-phosphate from D-ribulose 5-phosphate (non-oxidative stage): step 1/1. Its function is as follows. Catalyzes the reversible conversion of ribose-5-phosphate to ribulose 5-phosphate. In Synechococcus sp. (strain ATCC 27144 / PCC 6301 / SAUG 1402/1) (Anacystis nidulans), this protein is Ribose-5-phosphate isomerase A.